The primary structure comprises 133 residues: Thioredoxin-2, mitochondrial (133 aa).

Residues M1–R29 constitute a mitochondrion transit peptide. The Thioredoxin domain occupies K30–E133. Active-site nucleophile residues include C59 and C62. C59 and C62 are disulfide-bonded.

The protein belongs to the thioredoxin family. In terms of assembly, interacts with arg3.

Its subcellular location is the mitochondrion. Its function is as follows. Disulfide reductase which serves multiple functions in mitochondria, protecting mitochondrial components against thiol-oxidative damage as a thiol-disulfide oxidoreductase, and supporting urea cycle and respiration in mitochondria in a manner independent of active site thiols. The sequence is that of Thioredoxin-2, mitochondrial (trx2) from Schizosaccharomyces pombe (strain 972 / ATCC 24843) (Fission yeast).